The primary structure comprises 315 residues: Protein FRA10AC1 homolog (315 aa).

Position 1 is an N-acetylmethionine (Met1). Residues Met1–Val28 are disordered. Ser9 and Ser12 each carry phosphoserine. Lys36 carries the post-translational modification N6-acetyllysine. A compositionally biased stretch (basic residues) spans Lys225–Lys235. Residues Lys225–Asp308 form a disordered region. Composition is skewed to basic and acidic residues over residues Thr236 to Arg245 and Glu255 to Ala278. Residues Ser283 and Ser285 each carry the phosphoserine modification.

In terms of assembly, interacts with ESS2.

Its subcellular location is the nucleus. Its function is as follows. May be involved in pre-mRNA splicing. This is Protein FRA10AC1 homolog (Fra10ac1) from Mus musculus (Mouse).